The chain runs to 331 residues: ADP,ATP carrier protein 2, mitochondrial (331 aa).

3 Solcar repeats span residues 29 to 122 (KNFA…FKRM), 134 to 226 (KWFG…LKPV), and 238 to 320 (ASFA…LQIL). 5 consecutive transmembrane segments (helical) span residues 31–58 (FAIDFLMGGVSAAVSKTAAAPIERVKLL), 99–123 (TANVIRYFPTQALNFAFKDYFKRMF), 132–152 (YWKWFGGNLASGGAAGASSLF), 202–223 (FNISCVGIIVYRGLYFGLYDSL), and 237–257 (FASFALGWLITNGAGLASYPI). The ADP site is built by Arg-104 and Lys-116. Arg-261 is an ADP binding site. The tract at residues 261–266 (RRRMMM) is important for transport activity. The Nucleotide carrier signature motif signature appears at 261-266 (RRRMMM). A helical membrane pass occupies residues 297–317 (AGANILRAIAGAGVLSGYDQL).

This sequence belongs to the mitochondrial carrier (TC 2.A.29) family. In terms of assembly, monomer.

It is found in the mitochondrion inner membrane. The catalysed reaction is ADP(in) + ATP(out) = ADP(out) + ATP(in). The matrix-open state (m-state) is inhibited by the membrane-permeable bongkrekic acid (BKA). The cytoplasmic-open state (c-state) is inhibited by the membrane-impermeable toxic inhibitor carboxyatractyloside (CATR). Its function is as follows. ADP:ATP antiporter that mediates import of ADP into the mitochondrial matrix for ATP synthesis, and export of ATP out to fuel the cell. Cycles between the cytoplasmic-open state (c-state) and the matrix-open state (m-state): operates by the alternating access mechanism with a single substrate-binding site intermittently exposed to either the cytosolic (c-state) or matrix (m-state) side of the inner mitochondrial membrane. The polypeptide is ADP,ATP carrier protein 2, mitochondrial (ANT-G2) (Triticum aestivum (Wheat)).